The chain runs to 388 residues: Protein RecA (388 aa).

79 to 86 (GPESSGKT) contacts ATP. Residues 347–372 (IDGEEVSEQDTENKKDEPKKEEAVNE) are disordered. The segment covering 357–369 (TENKKDEPKKEEA) has biased composition (basic and acidic residues).

The protein belongs to the RecA family.

It localises to the cytoplasm. Functionally, can catalyze the hydrolysis of ATP in the presence of single-stranded DNA, the ATP-dependent uptake of single-stranded DNA by duplex DNA, and the ATP-dependent hybridization of homologous single-stranded DNAs. It interacts with LexA causing its activation and leading to its autocatalytic cleavage. This Streptococcus pneumoniae (strain CGSP14) protein is Protein RecA.